The following is a 285-amino-acid chain: uncharacterized protein (285 aa).

7 consecutive transmembrane segments (helical) span residues 6-26 (YLVV…TPLI), 38-58 (VFAA…YIFP), 84-104 (IFLL…IFLR), 110-130 (GVLA…ELIF), 153-173 (FMMH…DDGF), 176-196 (ISFF…ALMV), and 236-256 (LIFG…TVLV).

Its subcellular location is the cell membrane. This is an uncharacterized protein from Mycoplasma pneumoniae (strain ATCC 29342 / M129 / Subtype 1) (Mycoplasmoides pneumoniae).